The following is a 500-amino-acid chain: Hexose transporter 1 (500 aa).

Over 1–25 the chain is Cytoplasmic; the sequence is MKNSNEISSSQSLKNNGSDGFFNTS. The chain crosses the membrane as a helical span at residues 26–46; sequence LMYVLAACLASFLFGYQVSVL. The Extracellular segment spans residues 47–75; that stretch reads NTIKDFIVIEFGWCAGKEVNCDDSTLKSS. C60 and C67 are oxidised to a cystine. A helical transmembrane segment spans residues 76–96; sequence FLLASVFIGAVVGSGFSGFLV. Residues 97 to 101 are Cytoplasmic-facing; the sequence is QHGRR. Residues 102 to 122 traverse the membrane as a helical segment; the sequence is FSLLVIYNFFILVSILTSITH. Residues 123–131 are Extracellular-facing; sequence HFHTILFSR. Residues 132–152 traverse the membrane as a helical segment; the sequence is LLSGFGIGLITVSVPMYISEM. The Cytoplasmic segment spans residues 153 to 166; sequence THKDKKGAYGVLHQ. Q166 is a binding site for alpha-D-glucose. Beta-D-glucose is bound at residue Q166. Residues 167 to 187 form a helical membrane-spanning segment; sequence LFITFGIFIAVLLGMAMGNVP. At 188–203 the chain is on the extracellular side; sequence EEVNNPLGTFQQIWWR. A helical membrane pass occupies residues 204-224; sequence LMFFFPCIISILGIVLLTFFF. Over 225–289 the chain is Cytoplasmic; sequence KEETPYYLFE…RAMKIPSYRY (65 aa). The helical transmembrane segment at 290-310 threads the bilayer; the sequence is VILLGCILSGLQQFTGINVLV. Alpha-D-glucose is bound by residues Q301, Q302, and N307. Beta-D-glucose is bound at residue Q301. Residue N307 participates in beta-D-glucose binding. Residues 311–327 are Extracellular-facing; that stretch reads SNSNALYKGFLTNEWIT. Residues 328-348 traverse the membrane as a helical segment; the sequence is TLSVIMTVVNFLMTFPAIYIV. N337 contacts beta-D-glucose. At 349-356 the chain is on the cytoplasmic side; the sequence is EKLGRKTL. The helical transmembrane segment at 357–377 threads the bilayer; sequence LLCGCAGIVCAFLPTAIANLI. The Extracellular portion of the chain corresponds to 378–390; that stretch reads NNTSDVVKKLSIS. A helical transmembrane segment spans residues 391–411; sequence ATFVMIVSFAVSYGPVLWIYL. W408 contacts alpha-D-glucose. Residues 412–425 are Cytoplasmic-facing; that stretch reads HEMFPSEIKDSAAS. Residues 426-446 traverse the membrane as a helical segment; it reads LASLVNWMCAIIVVFPSDIII. The Extracellular segment spans residues 447 to 451; it reads KQSPT. Residues 452–472 form a helical membrane-spanning segment; sequence ILFFIFSGMSIVAFLFIFFFI. At 473–500 the chain is on the cytoplasmic side; that stretch reads KETKGGEIGTSPYITLEERQKHMGKSVV.

The protein belongs to the major facilitator superfamily. Sugar transporter (TC 2.A.1.1) family. Homodimer.

The protein resides in the cell membrane. The catalysed reaction is D-glucose(out) = D-glucose(in). It carries out the reaction D-fructose(out) = D-fructose(in). It catalyses the reaction D-galactose(in) = D-galactose(out). The enzyme catalyses D-mannose(out) = D-mannose(in). The catalysed reaction is D-glucosamine(out) = D-glucosamine(in). It carries out the reaction D-xylose(out) = D-xylose(in). With respect to regulation, inhibited by cytochalasin B. Sodium-independent facilitative hexose transporter. Can transport D-glucose and D-fructose. Can transport D-mannose, D-galactose, D-xylose and D-glucosamine. The chain is Hexose transporter 1 from Plasmodium knowlesi.